Here is a 101-residue protein sequence, read N- to C-terminus: Urease subunit beta (101 aa).

Belongs to the urease beta subunit family. Heterotrimer of UreA (gamma), UreB (beta) and UreC (alpha) subunits. Three heterotrimers associate to form the active enzyme.

It is found in the cytoplasm. It carries out the reaction urea + 2 H2O + H(+) = hydrogencarbonate + 2 NH4(+). It functions in the pathway nitrogen metabolism; urea degradation; CO(2) and NH(3) from urea (urease route): step 1/1. The protein is Urease subunit beta of Azotobacter vinelandii (strain DJ / ATCC BAA-1303).